Reading from the N-terminus, the 178-residue chain is ATP synthase subunit delta (178 aa).

It belongs to the ATPase delta chain family. In terms of assembly, F-type ATPases have 2 components, F(1) - the catalytic core - and F(0) - the membrane proton channel. F(1) has five subunits: alpha(3), beta(3), gamma(1), delta(1), epsilon(1). F(0) has three main subunits: a(1), b(2) and c(10-14). The alpha and beta chains form an alternating ring which encloses part of the gamma chain. F(1) is attached to F(0) by a central stalk formed by the gamma and epsilon chains, while a peripheral stalk is formed by the delta and b chains.

Its subcellular location is the cell membrane. Its function is as follows. F(1)F(0) ATP synthase produces ATP from ADP in the presence of a proton or sodium gradient. F-type ATPases consist of two structural domains, F(1) containing the extramembraneous catalytic core and F(0) containing the membrane proton channel, linked together by a central stalk and a peripheral stalk. During catalysis, ATP synthesis in the catalytic domain of F(1) is coupled via a rotary mechanism of the central stalk subunits to proton translocation. In terms of biological role, this protein is part of the stalk that links CF(0) to CF(1). It either transmits conformational changes from CF(0) to CF(1) or is implicated in proton conduction. This chain is ATP synthase subunit delta, found in Streptococcus mutans serotype c (strain ATCC 700610 / UA159).